Here is a 562-residue protein sequence, read N- to C-terminus: DNA ligase (562 aa).

E250 is a binding site for ATP. Catalysis depends on K252, which acts as the N6-AMP-lysine intermediate. ATP is bound by residues R257, R272, E302, F342, R417, and K423.

Belongs to the ATP-dependent DNA ligase family. Requires Mg(2+) as cofactor. It depends on Zn(2+) as a cofactor.

The enzyme catalyses ATP + (deoxyribonucleotide)n-3'-hydroxyl + 5'-phospho-(deoxyribonucleotide)m = (deoxyribonucleotide)n+m + AMP + diphosphate.. It catalyses the reaction NAD(+) + (deoxyribonucleotide)n-3'-hydroxyl + 5'-phospho-(deoxyribonucleotide)m = (deoxyribonucleotide)n+m + AMP + beta-nicotinamide D-nucleotide.. In terms of biological role, DNA ligase that seals nicks in double-stranded DNA during DNA replication, DNA recombination and DNA repair. Can use both ATP and NAD(+), but NAD(+) may be a preferred nucleotide cofactor. The polypeptide is DNA ligase (Thermococcus onnurineus (strain NA1)).